The primary structure comprises 516 residues: UvrABC system protein C (516 aa).

Residues 9–87 (HLPGCYLFKD…IKKHWPRYNI (79 aa)) form the GIY-YIG domain. In terms of domain architecture, UVR spans 191 to 226 (GELIESMEKEMKKMAAKQMFEQAMALRDEISALEYL).

Belongs to the UvrC family. As to quaternary structure, interacts with UvrB in an incision complex.

It is found in the cytoplasm. Functionally, the UvrABC repair system catalyzes the recognition and processing of DNA lesions. UvrC both incises the 5' and 3' sides of the lesion. The N-terminal half is responsible for the 3' incision and the C-terminal half is responsible for the 5' incision. This chain is UvrABC system protein C, found in Methanosarcina acetivorans (strain ATCC 35395 / DSM 2834 / JCM 12185 / C2A).